The following is a 195-amino-acid chain: Interferon tau-2 (195 aa).

The signal sequence occupies residues 1–23 (MAFVLSLLMALVLVSYGPGGSLG). Cystine bridges form between C24–C122 and C52–C162.

This sequence belongs to the alpha/beta interferon family. IFN-alphaII subfamily. In terms of tissue distribution, constitutively and exclusively expressed in the mononuclear cells of the extraembryonic trophectoderm.

The protein localises to the secreted. Its function is as follows. Paracrine hormone primarily responsible for maternal recognition of pregnancy. Interacts with endometrial receptors, probably type I interferon receptors, and blocks estrogen receptor expression, preventing the estrogen-induced increase in oxytocin receptor expression in the endometrium. This results in the suppression of the pulsatile endometrial release of the luteolytic hormone prostaglandin F2-alpha, hindering the regression of the corpus luteum (luteolysis) and therefore a return to ovarian cyclicity. This, and a possible direct effect of IFN-tau on prostaglandin synthesis, leads in turn to continued ovarian progesterone secretion, which stimulates the secretion by the endometrium of the nutrients required for the growth of the conceptus. In summary, displays particularly high antiviral and antiproliferative potency concurrently with particular weak cytotoxicity, high antiluteolytic activity and immunomodulatory properties. In contrast with other IFNs, IFN-tau is not virally inducible. The sequence is that of Interferon tau-2 (IFNT2) from Ovis aries (Sheep).